Here is a 467-residue protein sequence, read N- to C-terminus: Cysteine--tRNA ligase (467 aa).

Residue Cys30 participates in Zn(2+) binding. The 'HIGH' region motif lies at 32-42; that stretch reads PTVYDDSHLGH. The Zn(2+) site is built by Cys209, His239, and Glu243. Residues 271–275 carry the 'KMSKS' region motif; that stretch reads KMSKS. Lys274 provides a ligand contact to ATP.

Belongs to the class-I aminoacyl-tRNA synthetase family. As to quaternary structure, monomer. Requires Zn(2+) as cofactor.

It is found in the cytoplasm. It catalyses the reaction tRNA(Cys) + L-cysteine + ATP = L-cysteinyl-tRNA(Cys) + AMP + diphosphate. The chain is Cysteine--tRNA ligase from Aliarcobacter butzleri (strain RM4018) (Arcobacter butzleri).